The sequence spans 160 residues: Globin CTT-Y (160 aa).

The N-terminal stretch at 1–16 is a signal peptide; it reads MKVLAIFALCIIGALA. The 144-residue stretch at 17-160 folds into the Globin domain; the sequence is TPCDDFKIMQ…IRKVINANLE (144 aa). 2 residues coordinate heme b: His74 and His109.

Belongs to the globin family.

The chain is Globin CTT-Y (CTT-Y) from Chironomus thummi piger (Midge).